The following is a 344-amino-acid chain: Methionine import ATP-binding protein MetN 1 (344 aa).

Positions 2-241 constitute an ABC transporter domain; sequence IEIRNLSQRF…PHHEVTRALI (240 aa). Residue 38–45 participates in ATP binding; that stretch reads GRSGAGKS.

Belongs to the ABC transporter superfamily. Methionine importer (TC 3.A.1.24) family. The complex is composed of two ATP-binding proteins (MetN), two transmembrane proteins (MetI) and a solute-binding protein (MetQ).

The protein resides in the cell inner membrane. It catalyses the reaction L-methionine(out) + ATP + H2O = L-methionine(in) + ADP + phosphate + H(+). It carries out the reaction D-methionine(out) + ATP + H2O = D-methionine(in) + ADP + phosphate + H(+). Part of the ABC transporter complex MetNIQ involved in methionine import. Responsible for energy coupling to the transport system. The protein is Methionine import ATP-binding protein MetN 1 of Burkholderia mallei (strain ATCC 23344).